Here is a 459-residue protein sequence, read N- to C-terminus: Transcriptional coactivator YAP1-A (459 aa).

The segment covering 1–13 has biased composition (low complexity); that stretch reads MEPGSQQQPSAPA. Positions 1–22 are disordered; the sequence is MEPGSQQQPSAPAQQPPPVGHQ. Phosphoserine; by LATS1 and LATS2 occurs at positions 30, 80, 98, and 134. 2 disordered regions span residues 65-99 and 126-145; these read FKQP…AHSS and SAPH…PLPP. 2 WW domains span residues 141-174 and 199-232; these read VPLP…DPRK and GPLP…DPRL. The tract at residues 246–268 is disordered; the sequence is NAPVKAPPALPPPSPQTGVLGSG. The segment covering 250–260 has biased composition (pro residues); that stretch reads KAPPALPPPSP. Residues 261–459 are transactivation domain; the sequence is QTGVLGSGGN…LDKESFLTWL (199 aa). The stretch at 269–297 forms a coiled coil; it reads GNQQMRLQQLQMEKERLRLKHQELLRQVR. Positions 344–363 are disordered; that stretch reads GTYHSRDESTESGLSMSSYS. Residues 354-363 show a composition bias toward polar residues; that stretch reads ESGLSMSSYS.

The protein belongs to the YAP1 family. As to quaternary structure, interacts with tead1. Phosphorylated by lats1 and lats2; leading to cytoplasmic translocation and inactivation.

It is found in the cytoplasm. The protein resides in the nucleus. Its subcellular location is the cell junction. The protein localises to the tight junction. It localises to the cell membrane. Transcriptional regulator which can act both as a coactivator and a corepressor and is the critical downstream regulatory target in the Hippo signaling pathway that plays a pivotal role in organ size control and tumor suppression by restricting proliferation and promoting apoptosis. Plays a key role in tissue tension and 3D tissue shape by regulating cortical actomyosin network formation. Required for expansion of the neural plate and neural plate border zone progenitor pools. Acts as a direct regulator of pax3 expression via interaction with tead1. The protein is Transcriptional coactivator YAP1-A of Xenopus laevis (African clawed frog).